A 325-amino-acid polypeptide reads, in one-letter code: NADH-quinone oxidoreductase subunit H (325 aa).

The next 8 membrane-spanning stretches (helical) occupy residues Ile11 to Phe31, Val81 to Val101, Ile114 to Gly134, Ala149 to Ala169, Met186 to Val206, Phe237 to Phe257, Leu265 to Ile285, and Val304 to Ala324.

This sequence belongs to the complex I subunit 1 family. NDH-1 is composed of 13 different subunits. Subunits NuoA, H, J, K, L, M, N constitute the membrane sector of the complex.

The protein localises to the cell inner membrane. It catalyses the reaction a quinone + NADH + 5 H(+)(in) = a quinol + NAD(+) + 4 H(+)(out). Its function is as follows. NDH-1 shuttles electrons from NADH, via FMN and iron-sulfur (Fe-S) centers, to quinones in the respiratory chain. The immediate electron acceptor for the enzyme in this species is believed to be ubiquinone. Couples the redox reaction to proton translocation (for every two electrons transferred, four hydrogen ions are translocated across the cytoplasmic membrane), and thus conserves the redox energy in a proton gradient. This subunit may bind ubiquinone. In Serratia proteamaculans (strain 568), this protein is NADH-quinone oxidoreductase subunit H.